A 428-amino-acid chain; its full sequence is Isocitrate lyase 1 (428 aa).

91–93 is a substrate binding site; it reads SGW. Asp-153 contacts Mg(2+). Cys-191 serves as the catalytic Proton acceptor. Substrate-binding positions include 192–193, Arg-228, 313–317, and Thr-347; these read GH and NCSPS.

Belongs to the isocitrate lyase/PEP mutase superfamily. Isocitrate lyase family. As to quaternary structure, homotetramer. Mg(2+) serves as cofactor.

It carries out the reaction D-threo-isocitrate = glyoxylate + succinate. It catalyses the reaction (2S,3R)-3-hydroxybutane-1,2,3-tricarboxylate = pyruvate + succinate. Its pathway is carbohydrate metabolism; glyoxylate cycle; (S)-malate from isocitrate: step 1/2. Involved in the persistence and virulence of M.tuberculosis. Catalyzes the reversible formation of succinate and glyoxylate from isocitrate, a key step of the glyoxylate cycle, which operates as an anaplerotic route for replenishing the tricarboxylic acid cycle during growth on fatty acid substrates. It also catalyzes the formation of pyruvate and succinate from 2-methylisocitrate, a key step in the methylcitrate cycle (propionate degradation route). This is Isocitrate lyase 1 (icl1) from Mycobacterium tuberculosis (strain ATCC 35801 / TMC 107 / Erdman).